The sequence spans 325 residues: Solute-binding protein Bpro_4736 (325 aa).

The first 27 residues, 1 to 27 (MKTRTLKVLKPTLALLLAASFSAGALA), serve as a signal peptide directing secretion. Residue 168-173 (RISPVY) participates in phenylglyoxylate binding.

Belongs to the bacterial solute-binding protein 7 family. In terms of assembly, the complex is comprised of an extracytoplasmic solute-binding protein and a heteromeric permease formed by two transmembrane proteins.

Its subcellular location is the periplasm. Its function is as follows. Solute-binding protein that binds phenylglyoxylate (in vitro). Probably part of a tripartite ATP-independent periplasmic (TRAP) transport system that mediates solute transport into the cytoplasm. The chain is Solute-binding protein Bpro_4736 from Polaromonas sp. (strain JS666 / ATCC BAA-500).